The chain runs to 312 residues: Probable deoxyhypusine synthase (312 aa).

Catalysis depends on K285, which acts as the Nucleophile.

Belongs to the deoxyhypusine synthase family. The cofactor is NAD(+).

It catalyses the reaction [eIF5A protein]-L-lysine + spermidine = [eIF5A protein]-deoxyhypusine + propane-1,3-diamine. The protein operates within protein modification; eIF5A hypusination. Its function is as follows. Catalyzes the NAD-dependent oxidative cleavage of spermidine and the subsequent transfer of the butylamine moiety of spermidine to the epsilon-amino group of a specific lysine residue of the eIF-5A precursor protein to form the intermediate deoxyhypusine residue. The polypeptide is Probable deoxyhypusine synthase (dys) (Saccharolobus solfataricus (strain ATCC 35092 / DSM 1617 / JCM 11322 / P2) (Sulfolobus solfataricus)).